Here is a 379-residue protein sequence, read N- to C-terminus: Trans-prenyltransferase abpB (379 aa).

Substrate is bound by residues 90–91 (RL), arginine 112, lysine 197, arginine 264, lysine 266, tyrosine 268, and tyrosine 338.

This sequence belongs to the tryptophan dimethylallyltransferase family.

It catalyses the reaction aspulvinone E + 2 dimethylallyl diphosphate = aspulvinone H + 2 diphosphate. It carries out the reaction butyrolactone II + dimethylallyl diphosphate = butyrolactone I + diphosphate. Its pathway is secondary metabolite biosynthesis. In terms of biological role, trans-prenyltransferase that acts in both the aspulvinones and butyrolactones pathways. Prenylates aspulvinone E and butyrolactone II to yield repectively aspulvinone H and butyrolactone I. The protein is Trans-prenyltransferase abpB of Aspergillus terreus (strain NIH 2624 / FGSC A1156).